We begin with the raw amino-acid sequence, 497 residues long: Kynureninase (497 aa).

The disordered stretch occupies residues 59–86; it reads GRLPAYPPNHAKPGETATAQNGTSNTND. Over residues 75-86 the composition is skewed to polar residues; the sequence is ATAQNGTSNTND. Residues Leu-166, Thr-167, 194 to 197, Asp-278, His-281, and Tyr-303 each bind pyridoxal 5'-phosphate; that span reads FPSD. N6-(pyridoxal phosphate)lysine is present on Lys-304. Pyridoxal 5'-phosphate is bound by residues Trp-337 and Asn-365.

It belongs to the kynureninase family. Homodimer. Requires pyridoxal 5'-phosphate as cofactor.

The protein localises to the cytoplasm. It catalyses the reaction L-kynurenine + H2O = anthranilate + L-alanine + H(+). The catalysed reaction is 3-hydroxy-L-kynurenine + H2O = 3-hydroxyanthranilate + L-alanine + H(+). Its pathway is amino-acid degradation; L-kynurenine degradation; L-alanine and anthranilate from L-kynurenine: step 1/1. It functions in the pathway cofactor biosynthesis; NAD(+) biosynthesis; quinolinate from L-kynurenine: step 2/3. Its function is as follows. Catalyzes the cleavage of L-kynurenine (L-Kyn) and L-3-hydroxykynurenine (L-3OHKyn) into anthranilic acid (AA) and 3-hydroxyanthranilic acid (3-OHAA), respectively. This is Kynureninase from Pyricularia oryzae (strain 70-15 / ATCC MYA-4617 / FGSC 8958) (Rice blast fungus).